We begin with the raw amino-acid sequence, 244 residues long: Mannose-binding protein C (244 aa).

The first 18 residues, 1–18 (MSIFTSFLLLCVVTVVYA), serve as a signal peptide directing secretion. Positions 38 to 96 (GLNGFPGKDGRDGAKGEKGEPGQGLRGLQGPPGKVGPTGPPGNPGLKGAVGPKGDRGDR) constitute a Collagen-like domain. Positions 40–101 (NGFPGKDGRD…DRGDRAEFDT (62 aa)) are disordered. At Pro-43 the chain carries 4-hydroxyproline. Residues 45–57 (KDGRDGAKGEKGE) show a composition bias toward basic and acidic residues. 4-hydroxyproline occurs at positions 58, 69, 78, and 81. Residues 65–74 (LQGPPGKVGP) show a composition bias toward low complexity. The span at 90 to 99 (KGDRGDRAEF) shows a compositional bias: basic and acidic residues. Residues 108 to 126 (IAALRSELRALRNWVLFSL) are a coiled coil. The 113-residue stretch at 129–241 (KVGKKYFVSS…CSDSFLAICE (113 aa)) folds into the C-type lectin domain. 2 disulfides stabilise this stretch: Cys-151/Cys-240 and Cys-218/Cys-232. The N-linked (GlcNAc...) asparagine glycan is linked to Asn-210.

As to quaternary structure, oligomeric complex of 3 or more homotrimers. Interacts with MASP1 and MASP2. Interacts with MEP1A and MEP1B and may inhibit their catalytic activity. Post-translationally, hydroxylation on proline residues within the sequence motif, GXPG, is most likely to be 4-hydroxy as this fits the requirement for 4-hydroxylation in vertebrates.

It localises to the secreted. Functionally, calcium-dependent lectin involved in innate immune defense. Binds mannose, fucose and N-acetylglucosamine on different microorganisms and activates the lectin complement pathway. Binds to late apoptotic cells, as well as to apoptotic blebs and to necrotic cells, but not to early apoptotic cells, facilitating their uptake by macrophages. The chain is Mannose-binding protein C (Mbl2) from Mus musculus (Mouse).